A 239-amino-acid chain; its full sequence is Carboxy-S-adenosyl-L-methionine synthase (239 aa).

Residues tyrosine 35, 64 to 66, 88 to 89, and arginine 195 each bind S-adenosyl-L-methionine; these read GCS and DN.

It belongs to the class I-like SAM-binding methyltransferase superfamily. Cx-SAM synthase family. In terms of assembly, homodimer.

It carries out the reaction prephenate + S-adenosyl-L-methionine = carboxy-S-adenosyl-L-methionine + 3-phenylpyruvate + H2O. In terms of biological role, catalyzes the conversion of S-adenosyl-L-methionine (SAM) to carboxy-S-adenosyl-L-methionine (Cx-SAM). In Helicobacter pylori (strain Shi470), this protein is Carboxy-S-adenosyl-L-methionine synthase.